A 578-amino-acid chain; its full sequence is Putative multidrug export ATP-binding/permease protein SAB1799c (578 aa).

The Cytoplasmic portion of the chain corresponds to 1 to 15 (MIKRYLQFVKPYKYR). The chain crosses the membrane as a helical span at residues 16–36 (IFATIIVGIIKFGIPMLIPLL). An ABC transmembrane type-1 domain is found at 16–306 (IFATIIVGII…LVASFTTLTQ (291 aa)). At 37 to 59 (IKYAIDGVINNHALTTDEKVHHL) the chain is on the extracellular side. A helical transmembrane segment spans residues 60-80 (TIAIGIALFIFVIVRPPIEFI). The Cytoplasmic segment spans residues 81 to 138 (RQYLAQWTSNKILYDIRKKLYNHLQALSARFYANNQVGQVISRVINDVEQTKDFILTG). The chain crosses the membrane as a helical span at residues 139–159 (LMNIWLDCITIIIALSIMFFL). Over 160-162 (DVK) the chain is Extracellular. The chain crosses the membrane as a helical span at residues 163-183 (LTLAALFIFPFYILTVYVFFG). The Cytoplasmic segment spans residues 184–242 (RLRKLTRERSQALAEVQGFLHERVQGISVVKSFAIEDNEAKNFDKKNANFLTRALKHTR). A helical transmembrane segment spans residues 243–262 (WNAYSFATINTVTDIGPIIV). At 263–267 (IGVGA) the chain is on the extracellular side. A helical membrane pass occupies residues 268–287 (YLAISGSITVGTLAAFVGYL). Over 288-578 (ELLFGPLRRL…YEHLYSIQNL (291 aa)) the chain is Cytoplasmic. The ABC transporter domain maps to 340 to 575 (IDIYHVNFQY…QGAYEHLYSI (236 aa)). 374-381 (GMSGGGKS) lines the ATP pocket.

This sequence belongs to the ABC transporter superfamily. Homodimer.

The protein localises to the cell membrane. May be involved in multidrug export. Transmembrane domains (TMD) form a pore in the cell membrane and the ATP-binding domain (NBD) is responsible for energy generation. The chain is Putative multidrug export ATP-binding/permease protein SAB1799c from Staphylococcus aureus (strain bovine RF122 / ET3-1).